The primary structure comprises 427 residues: 3-phosphoshikimate 1-carboxyvinyltransferase (427 aa).

Lys22, Ser23, and Arg27 together coordinate 3-phosphoshikimate. Position 22 (Lys22) interacts with phosphoenolpyruvate. Positions 96 and 124 each coordinate phosphoenolpyruvate. 3-phosphoshikimate is bound by residues Ser169, Ser170, Gln171, Ser197, Asp313, Asn336, and Lys340. Gln171 is a phosphoenolpyruvate binding site. Asp313 serves as the catalytic Proton acceptor. Phosphoenolpyruvate-binding residues include Arg344, Arg386, and Lys411.

The protein belongs to the EPSP synthase family. Monomer.

It localises to the cytoplasm. The enzyme catalyses 3-phosphoshikimate + phosphoenolpyruvate = 5-O-(1-carboxyvinyl)-3-phosphoshikimate + phosphate. It functions in the pathway metabolic intermediate biosynthesis; chorismate biosynthesis; chorismate from D-erythrose 4-phosphate and phosphoenolpyruvate: step 6/7. Catalyzes the transfer of the enolpyruvyl moiety of phosphoenolpyruvate (PEP) to the 5-hydroxyl of shikimate-3-phosphate (S3P) to produce enolpyruvyl shikimate-3-phosphate and inorganic phosphate. This Escherichia coli (strain SMS-3-5 / SECEC) protein is 3-phosphoshikimate 1-carboxyvinyltransferase.